The primary structure comprises 213 residues: Histidine biosynthesis bifunctional protein HisIE (213 aa).

Positions 1–114 (MLTTEKYQGL…FHPALTDFSF (114 aa)) are phosphoribosyl-AMP cyclohydrolase. The interval 115-213 (LFQLENIISI…RVRSKLKKKH (99 aa)) is phosphoribosyl-ATP pyrophosphohydrolase.

The protein in the N-terminal section; belongs to the PRA-CH family. This sequence in the C-terminal section; belongs to the PRA-PH family.

Its subcellular location is the cytoplasm. The catalysed reaction is 1-(5-phospho-beta-D-ribosyl)-ATP + H2O = 1-(5-phospho-beta-D-ribosyl)-5'-AMP + diphosphate + H(+). The enzyme catalyses 1-(5-phospho-beta-D-ribosyl)-5'-AMP + H2O = 1-(5-phospho-beta-D-ribosyl)-5-[(5-phospho-beta-D-ribosylamino)methylideneamino]imidazole-4-carboxamide. It functions in the pathway amino-acid biosynthesis; L-histidine biosynthesis; L-histidine from 5-phospho-alpha-D-ribose 1-diphosphate: step 2/9. It participates in amino-acid biosynthesis; L-histidine biosynthesis; L-histidine from 5-phospho-alpha-D-ribose 1-diphosphate: step 3/9. The protein is Histidine biosynthesis bifunctional protein HisIE of Blochmanniella floridana.